Reading from the N-terminus, the 402-residue chain is Multidrug resistance protein MdtH (402 aa).

Topologically, residues 1–12 (MSRVSQARNLGK) are cytoplasmic. A helical membrane pass occupies residues 13 to 33 (YFLLIDNMLVVLGFFVVFPLI). The Periplasmic portion of the chain corresponds to 34-98 (SIRFVDQMGW…GFATMGIAHE (65 aa)). Residues 99–116 (PWLLWFSCLLSGLGGTLF) form a helical membrane-spanning segment. Residues 117–138 (DPPRSALVVKLIRPQQRGRFFS) are Cytoplasmic-facing. The chain crosses the membrane as a helical span at residues 139-159 (LLMMQDSAGAVIGALLGSWLL). Topologically, residues 160–164 (QYDFR) are periplasmic. Residues 165–185 (LVCATGAVLFVLCAAFNAWLL) form a helical membrane-spanning segment. At 186–213 (PAWKLSTVRTPVREGMTRVMRDKRFVTY) the chain is on the cytoplasmic side. The chain crosses the membrane as a helical span at residues 214 to 234 (VLTLAGYYMLAVQVMLMLPIM). The Periplasmic portion of the chain corresponds to 235–243 (VNDVAGAPS). A helical transmembrane segment spans residues 244–264 (AVKWMYAIEACLSLTLLYPIA). Topologically, residues 265-276 (RWSEKHFRLEHR) are cytoplasmic. Residues 277–297 (LMAGLLIMSLSMMPVGMVSGL) traverse the membrane as a helical segment. The Periplasmic segment spans residues 298 to 299 (QQ). A helical membrane pass occupies residues 300 to 320 (LFTLICLFYIGSIIAEPARET). Over 321 to 339 (LSASLADARARGSYMGFSR) the chain is Cytoplasmic. A helical membrane pass occupies residues 340-360 (LGLAIGGAIGYIGGGWLFDLG). At 361 to 367 (KSAHQPE) the chain is on the periplasmic side. Residues 368-388 (LPWMMLGIIGIFTFLALGWQF) form a helical membrane-spanning segment. Topologically, residues 389–402 (SQKRAARRLLERDA) are cytoplasmic.

It belongs to the major facilitator superfamily. DHA1 family. MdtH (TC 2.A.1.2.21) subfamily.

The protein resides in the cell inner membrane. Its function is as follows. Confers resistance to norfloxacin and enoxacin. This is Multidrug resistance protein MdtH from Escherichia coli O139:H28 (strain E24377A / ETEC).